Here is a 270-residue protein sequence, read N- to C-terminus: Formamidopyrimidine-DNA glycosylase (270 aa).

Pro-2 acts as the Schiff-base intermediate with DNA in catalysis. Glu-3 acts as the Proton donor in catalysis. Catalysis depends on Lys-58, which acts as the Proton donor; for beta-elimination activity. Residues His-92, Arg-111, and Arg-153 each coordinate DNA. The FPG-type zinc-finger motif lies at 238–270; it reads SVYGASVCPVCGGALRQIRLAQRGTWFCPRCQR. The active-site Proton donor; for delta-elimination activity is the Arg-260.

It belongs to the FPG family. In terms of assembly, monomer. Requires Zn(2+) as cofactor.

It carries out the reaction Hydrolysis of DNA containing ring-opened 7-methylguanine residues, releasing 2,6-diamino-4-hydroxy-5-(N-methyl)formamidopyrimidine.. It catalyses the reaction 2'-deoxyribonucleotide-(2'-deoxyribose 5'-phosphate)-2'-deoxyribonucleotide-DNA = a 3'-end 2'-deoxyribonucleotide-(2,3-dehydro-2,3-deoxyribose 5'-phosphate)-DNA + a 5'-end 5'-phospho-2'-deoxyribonucleoside-DNA + H(+). Its function is as follows. Involved in base excision repair of DNA damaged by oxidation or by mutagenic agents. Acts as a DNA glycosylase that recognizes and removes damaged bases. Has a preference for oxidized purines, such as 7,8-dihydro-8-oxoguanine (8-oxoG). Has AP (apurinic/apyrimidinic) lyase activity and introduces nicks in the DNA strand. Cleaves the DNA backbone by beta-delta elimination to generate a single-strand break at the site of the removed base with both 3'- and 5'-phosphates. This chain is Formamidopyrimidine-DNA glycosylase, found in Halorhodospira halophila (strain DSM 244 / SL1) (Ectothiorhodospira halophila (strain DSM 244 / SL1)).